A 654-amino-acid chain; its full sequence is Chaperone protein DnaK (654 aa).

Threonine 205 carries the phosphothreonine; by autocatalysis modification. Residues 592–654 are disordered; it reads ELERQMQQIG…EVEILDDKKP (63 aa). Polar residues predominate over residues 608–621; that stretch reads AGQSETQSTGPGSY. Residues 622–636 show a composition bias toward low complexity; it reads QESSNQSSQHQTNNN.

It belongs to the heat shock protein 70 family.

Functionally, acts as a chaperone. This chain is Chaperone protein DnaK, found in Protochlamydia amoebophila (strain UWE25).